Reading from the N-terminus, the 580-residue chain is 9,13-epoxylabda-14-ene synthase, chloroplastic (580 aa).

A chloroplast-targeting transit peptide spans 1–32 (MSITFNLKIAPFSGPGIQRSKETFPATEIQIT). The Mg(2+) site is built by D322, D326, N466, T470, and E474. Positions 322–326 (DDFFD) match the DDXXD motif motif.

It belongs to the terpene synthase family. The cofactor is Mg(2+). In terms of tissue distribution, present in both leaves and flowers, with higher levels in leaves.

It localises to the plastid. It is found in the chloroplast. The enzyme catalyses peregrinol diphosphate = (13R)-9,13-epoxylabd-14-ene + diphosphate. It catalyses the reaction (+)-copalyl diphosphate = miltiradiene + diphosphate. It carries out the reaction 8-hydroxycopalyl diphosphate = (13R)-manoyl oxide + diphosphate. Its pathway is secondary metabolite biosynthesis; terpenoid biosynthesis. Involved in the biosynthesis of labdane-type diterpenoid including marrubiin and other labdane-related furanoid diterpenoids with potential applications as anti-diabetics, analgesics or vasorelaxants. Terpene synthase the catalyzes the conversion of peregrinol diphosphate to 9,13(R)-epoxy-labd-14-ene, from (+)-copalyl diphosphate ((+)-CPP) to miltiradiene and from 8-hydroxycopalyl diphosphate (LPP, labda-13-en-8-ol diphosphate) to manoyl oxide. The polypeptide is 9,13-epoxylabda-14-ene synthase, chloroplastic (Marrubium vulgare (White horehound)).